Here is a 181-residue protein sequence, read N- to C-terminus: dTDP-4-dehydrorhamnose 3,5-epimerase (181 aa).

Substrate is bound by residues Arg-23, Glu-28, Gln-47 to Asn-49, and Arg-59. The Proton acceptor role is filled by His-62. 2 residues coordinate substrate: Lys-72 and His-119. Catalysis depends on Tyr-132, which acts as the Proton donor. Residues Glu-143 and Lys-167 each coordinate substrate.

The protein belongs to the dTDP-4-dehydrorhamnose 3,5-epimerase family. Homodimer.

The catalysed reaction is dTDP-4-dehydro-6-deoxy-alpha-D-glucose = dTDP-4-dehydro-beta-L-rhamnose. Its pathway is carbohydrate biosynthesis; dTDP-L-rhamnose biosynthesis. It functions in the pathway bacterial outer membrane biogenesis; LPS O-antigen biosynthesis. In terms of biological role, catalyzes the epimerization of the C3' and C5'positions of dTDP-6-deoxy-D-xylo-4-hexulose, forming dTDP-6-deoxy-L-lyxo-4-hexulose. In Shigella flexneri, this protein is dTDP-4-dehydrorhamnose 3,5-epimerase (rfbC).